A 218-amino-acid chain; its full sequence is Octanoyltransferase (218 aa).

In terms of domain architecture, BPL/LPL catalytic spans G32 to D218. Substrate contacts are provided by residues R71–H78, A151–G153, and G164–S166. C182 acts as the Acyl-thioester intermediate in catalysis.

This sequence belongs to the LipB family.

It is found in the cytoplasm. It carries out the reaction octanoyl-[ACP] + L-lysyl-[protein] = N(6)-octanoyl-L-lysyl-[protein] + holo-[ACP] + H(+). The protein operates within protein modification; protein lipoylation via endogenous pathway; protein N(6)-(lipoyl)lysine from octanoyl-[acyl-carrier-protein]: step 1/2. In terms of biological role, catalyzes the transfer of endogenously produced octanoic acid from octanoyl-acyl-carrier-protein onto the lipoyl domains of lipoate-dependent enzymes. Lipoyl-ACP can also act as a substrate although octanoyl-ACP is likely to be the physiological substrate. This is Octanoyltransferase from Cereibacter sphaeroides (strain ATCC 17029 / ATH 2.4.9) (Rhodobacter sphaeroides).